The sequence spans 118 residues: Peptidyl-prolyl cis-trans isomerase Pin1 (118 aa).

Disordered regions lie at residues 1-37 (MSSE…ATTR) and 61-84 (LASR…GRGQ). One can recognise a PpiC domain in the interval 3 to 118 (SEKVRASHIL…SGVHIIKRTG (116 aa)). Over residues 12–22 (LIKHQGSRRKS) the composition is skewed to basic residues.

Belongs to the PpiC/parvulin rotamase family. The N-terminus is blocked. As to expression, expressed in roots, stems, leaves, flowers and seedlings.

Its subcellular location is the cytoplasm. The protein resides in the nucleus. It carries out the reaction [protein]-peptidylproline (omega=180) = [protein]-peptidylproline (omega=0). Inhibited in vitro by juglone. In terms of biological role, prolyl cis/trans isomerase with specificity for phospho-Ser-Pro bonds. The protein is Peptidyl-prolyl cis-trans isomerase Pin1 (PARV12.8) of Digitalis lanata (Grecian foxglove).